The primary structure comprises 150 residues: Arginine repressor (150 aa).

The protein belongs to the ArgR family.

Its subcellular location is the cytoplasm. It functions in the pathway amino-acid biosynthesis; L-arginine biosynthesis [regulation]. Functionally, regulates arginine biosynthesis genes. The chain is Arginine repressor from Staphylococcus saprophyticus subsp. saprophyticus (strain ATCC 15305 / DSM 20229 / NCIMB 8711 / NCTC 7292 / S-41).